A 233-amino-acid chain; its full sequence is Superoxide dismutase [Mn] 3.3, mitochondrial (233 aa).

The transit peptide at 1 to 29 (MALRTLASKNALSFALGGAARPSAESARG) directs the protein to the mitochondrion. Positions 57, 105, 194, and 198 each coordinate Mn(2+).

It belongs to the iron/manganese superoxide dismutase family. In terms of assembly, homotetramer. Mn(2+) serves as cofactor. In terms of tissue distribution, predominantly expressed in the embryo late in embryogenesis.

It localises to the mitochondrion matrix. It carries out the reaction 2 superoxide + 2 H(+) = H2O2 + O2. Destroys superoxide anion radicals which are normally produced within the cells and which are toxic to biological systems. The chain is Superoxide dismutase [Mn] 3.3, mitochondrial (SODA.2) from Zea mays (Maize).